The following is a 320-amino-acid chain: Malate dehydrogenase (320 aa).

NAD(+) is bound by residues 10-15 (GSGMIG) and aspartate 34. The substrate site is built by arginine 83 and arginine 89. NAD(+) is bound by residues asparagine 96 and 119-121 (ITN). Positions 121 and 152 each coordinate substrate. The active-site Proton acceptor is the histidine 176.

It belongs to the LDH/MDH superfamily. MDH type 3 family.

It carries out the reaction (S)-malate + NAD(+) = oxaloacetate + NADH + H(+). Functionally, catalyzes the reversible oxidation of malate to oxaloacetate. The polypeptide is Malate dehydrogenase (Brucella melitensis biotype 1 (strain ATCC 23456 / CCUG 17765 / NCTC 10094 / 16M)).